The chain runs to 484 residues: Myosin-binding protein H (484 aa).

Positions 1–78 are disordered; sequence MTGKATPEAS…KPEAPSEDVP (78 aa). 3 positions are modified to phosphothreonine: T2, T6, and T26. Positions 41-71 are enriched in low complexity; sequence QEQAPEPQKQPQAQDPAAHEAPATPATTKPE. In terms of domain architecture, Fibronectin type-III 1 spans 80–175; it reads APLQLTLEDV…LDQPVHIQEI (96 aa). Residues 179 to 267 form the Ig-like C2-type 1 domain; the sequence is PKIRVPRHLR…EGLEAKAAID (89 aa). The Fibronectin type-III 2 domain maps to 276 to 371; it reads PPSSIKLLDV…TKELAHIHKA (96 aa). An Ig-like C2-type 2 domain is found at 389–479; that stretch reads PSFTQPVADR…PAVDCRLEVK (91 aa).

Belongs to the immunoglobulin superfamily. MyBP family. As to expression, skeletal muscle.

Binds to myosin; probably involved in interaction with thick myofilaments in the A-band. In Rattus norvegicus (Rat), this protein is Myosin-binding protein H (Mybph).